The following is a 396-amino-acid chain: Cathepsin D (396 aa).

The first 18 residues, 1 to 18, serve as a signal peptide directing secretion; the sequence is MKFLYLFLFAVFAWTSDA. A propeptide spans 19-61 (activation peptide); it reads IVRIPLKKFRSIRRTLSDSGLNVEQLLAGTNSLQHNQGFPSSN. The Peptidase A1 domain occupies 76–393; that stretch reads YYGEIGLGTP…DRESNRVGFA (318 aa). Asp-94 is an active-site residue. Cys-107 and Cys-114 are joined by a disulfide. Residue Asn-131 is glycosylated (N-linked (GlcNAc...) asparagine). Residues Cys-272 and Cys-276 are joined by a disulfide bond. Asp-281 is a catalytic residue. A disulfide bond links Cys-315 and Cys-352.

Belongs to the peptidase A1 family. Monomer.

The protein resides in the lysosome. The catalysed reaction is Specificity similar to, but narrower than, that of pepsin A. Does not cleave the 4-Gln-|-His-5 bond in B chain of insulin.. With respect to regulation, inhibited by pepstatin. Acid protease active in intracellular protein breakdown. The protein is Cathepsin D (ctsd) of Clupea harengus (Atlantic herring).